A 374-amino-acid polypeptide reads, in one-letter code: LIM domain-binding protein 1-A (374 aa).

3 disordered regions span residues 1–24 (MLDRDVGPTPMYPPSYMEPGIGRH), 249–297 (PPAE…ALSS), and 322–374 (TRLE…QSSQ). Residues 267-297 (SGGSTMSSGGGNNNNSNSKKKSPASSFALSS) show a composition bias toward low complexity. In terms of domain architecture, LIM interaction domain (LID) spans 299 to 338 (DVMVVGEPTLMGGEFGDEDERLITRLENTQFDAANGIDDE). The segment covering 341–374 (FNSSPTMGTNSPWNSKAPSSQQGKNDNPSSQSSQ) has biased composition (polar residues).

It belongs to the LDB family. Expressed ubiquitously in the embryo and adult.

Its subcellular location is the nucleus. Binds to the LIM domain of a wide variety of LIM domain-containing transcription factors. This chain is LIM domain-binding protein 1-A (ldb1a), found in Danio rerio (Zebrafish).